A 410-amino-acid chain; its full sequence is Single Ig IL-1-related receptor (410 aa).

The Extracellular segment spans residues 1-118 (MPGVCDRAPD…TLQRAGPTSH (118 aa)). In terms of domain architecture, Ig-like C2-type spans 9-109 (PDFLSPSEDQ…IQNISFSSFT (101 aa)). N31, N73, N86, and N102 each carry an N-linked (GlcNAc...) asparagine glycan. The cysteines at positions 32 and 98 are disulfide-linked. A helical; Signal-anchor for type III membrane protein transmembrane segment spans residues 119–139 (VAAVLASLLVLLALLLAALLY). Topologically, residues 140-410 (VKCRLNVLLW…FYCLVSKDDM (271 aa)) are cytoplasmic. Positions 163-307 (KLYDAYVSYS…DFWKEVQLAL (145 aa)) constitute a TIR domain. The disordered stretch occupies residues 340–390 (EGRALDSEVDPDPEGDLGVRGPVFGEPSAPPHTSGVSLGESRSSEVDVSDL). S383 carries the phosphoserine modification.

The protein belongs to the interleukin-1 receptor family. Interacts with IL1R1, IRAK1, TLR4, TLR5, TLR9 and TRAF6. Upon IL-1 stimulation found in a complex at least composed of IL1R1, SIGIRR, MYD88, IRAK1 and TRAF6. Upon stimulation with LPC found in a complex at least composed of TLR4, SIG1IR, MYD88, IRAK1 and TRAF6. Interacts with PALM3. As to expression, mainly expressed in epithelial tissues such as kidney, lung and gut.

It is found in the membrane. Functionally, acts as a negative regulator of the Toll-like and IL-1R receptor signaling pathways. Attenuates the recruitment of receptor-proximal signaling components to the TLR4 receptor, probably through an TIR-TIR domain interaction with TLR4. Through its extracellular domain interferes with the heterodimerization of Il1R1 and IL1RAP. This chain is Single Ig IL-1-related receptor (SIGIRR), found in Homo sapiens (Human).